The chain runs to 418 residues: Tektin-1 (418 aa).

Coiled-coil stretches lie at residues 20-107 (NKSQ…SYKE), 134-177 (QELQ…DLRD), 266-308 (NGLK…QQEG), and 332-383 (IAQY…ENTI).

Belongs to the tektin family. In terms of assembly, microtubule inner protein component of sperm flagellar doublet microtubules. Post-translationally, ubiquitinated, leading to its degradation. Deubiquitinated by USP16, promoting its stability.

It is found in the cytoplasm. Its subcellular location is the cytoskeleton. The protein localises to the cilium axoneme. The protein resides in the flagellum axoneme. In terms of biological role, microtubule inner protein (MIP) part of the dynein-decorated doublet microtubules (DMTs) in cilia and flagellar axoneme. Forms filamentous polymers in the walls of ciliary and flagellar microtubules. This Mus musculus (Mouse) protein is Tektin-1 (Tekt1).